A 179-amino-acid polypeptide reads, in one-letter code: uncharacterized protein (179 aa).

A disordered region spans residues glutamine 160–valine 179. A compositionally biased stretch (polar residues) spans asparagine 165–valine 179.

Belongs to the Dps family.

This is an uncharacterized protein from Anabaena variabilis.